A 331-amino-acid polypeptide reads, in one-letter code: Ornithine carbamoyltransferase, catabolic (331 aa).

Residues 57–60, glutamine 82, arginine 106, and 133–136 contribute to the carbamoyl phosphate site; these read STRT and HPTQ. L-ornithine-binding positions include asparagine 166, aspartate 230, and 234–235; that span reads SM. Carbamoyl phosphate is bound by residues 272 to 273 and arginine 317; that span reads CL.

It belongs to the aspartate/ornithine carbamoyltransferase superfamily. OTCase family.

Its subcellular location is the cytoplasm. The enzyme catalyses carbamoyl phosphate + L-ornithine = L-citrulline + phosphate + H(+). The protein operates within amino-acid degradation; L-arginine degradation via ADI pathway; carbamoyl phosphate from L-arginine: step 2/2. Its function is as follows. Reversibly catalyzes the transfer of the carbamoyl group from carbamoyl phosphate (CP) to the N(epsilon) atom of ornithine (ORN) to produce L-citrulline. The chain is Ornithine carbamoyltransferase, catabolic (arcB) from Clostridium perfringens (strain ATCC 13124 / DSM 756 / JCM 1290 / NCIMB 6125 / NCTC 8237 / Type A).